Here is an 83-residue protein sequence, read N- to C-terminus: U25-theraphotoxin-Cg1a (83 aa).

The first 23 residues, 1–23, serve as a signal peptide directing secretion; the sequence is MRFHTLLFLSFLLLVSCALICTA. The propeptide occupies 24–48; that stretch reads QHPGLKKSGMFHENVGKGQHIEKKR. 3 disulfide bridges follow: Cys50–Cys66, Cys57–Cys71, and Cys65–Cys81.

The protein belongs to the neurotoxin 07 (Beta/delta-agtx) family. 03 (aga-4) subfamily. JZTX sub-subfamily. Expressed by the venom gland.

The protein resides in the secreted. Functionally, inhibits TTX-sensitive sodium currents in rat dorsal root ganglion (DRG) neurons. The sequence is that of U25-theraphotoxin-Cg1a from Chilobrachys guangxiensis (Chinese earth tiger tarantula).